The chain runs to 102 residues: Small ribosomal subunit protein eS24 (102 aa).

Belongs to the eukaryotic ribosomal protein eS24 family.

The sequence is that of Small ribosomal subunit protein eS24 from Methanobrevibacter smithii (strain ATCC 35061 / DSM 861 / OCM 144 / PS).